Consider the following 368-residue polypeptide: Glutamate 5-kinase (368 aa).

K9 is an ATP binding site. The substrate site is built by S49, D136, and N148. ATP-binding positions include 168 to 169 (TD) and 210 to 216 (TGGMMTK). The region spanning 275–353 (AGIITIDDGA…ADIENVLGYE (79 aa)) is the PUA domain.

It belongs to the glutamate 5-kinase family.

It is found in the cytoplasm. It carries out the reaction L-glutamate + ATP = L-glutamyl 5-phosphate + ADP. It functions in the pathway amino-acid biosynthesis; L-proline biosynthesis; L-glutamate 5-semialdehyde from L-glutamate: step 1/2. In terms of biological role, catalyzes the transfer of a phosphate group to glutamate to form L-glutamate 5-phosphate. The protein is Glutamate 5-kinase of Haemophilus influenzae (strain 86-028NP).